We begin with the raw amino-acid sequence, 201 residues long: Glycerol-3-phosphate acyltransferase (201 aa).

A run of 5 helical transmembrane segments spans residues 10–30, 59–79, 87–107, 116–136, and 161–181; these read ALIL…GIVI, PAAL…VLIA, AAQL…WLGF, FLGT…LTWL, and ILLG…LIFI.

It belongs to the PlsY family. In terms of assembly, probably interacts with PlsX.

The protein localises to the cell inner membrane. It carries out the reaction an acyl phosphate + sn-glycerol 3-phosphate = a 1-acyl-sn-glycero-3-phosphate + phosphate. It participates in lipid metabolism; phospholipid metabolism. Its function is as follows. Catalyzes the transfer of an acyl group from acyl-phosphate (acyl-PO(4)) to glycerol-3-phosphate (G3P) to form lysophosphatidic acid (LPA). This enzyme utilizes acyl-phosphate as fatty acyl donor, but not acyl-CoA or acyl-ACP. The polypeptide is Glycerol-3-phosphate acyltransferase (Cereibacter sphaeroides (strain ATCC 17029 / ATH 2.4.9) (Rhodobacter sphaeroides)).